Consider the following 320-residue polypeptide: Cytochrome f (320 aa).

The first 35 residues, 1 to 35 (MQTRKTFSWIKEEITRSISVLLMIYIITWASISNA), serve as a signal peptide directing secretion. Residues tyrosine 36, cysteine 56, cysteine 59, and histidine 60 each coordinate heme. A helical transmembrane segment spans residues 286-306 (VQGLLFFLASVILAQIFLVLK).

The protein belongs to the cytochrome f family. As to quaternary structure, the 4 large subunits of the cytochrome b6-f complex are cytochrome b6, subunit IV (17 kDa polypeptide, petD), cytochrome f and the Rieske protein, while the 4 small subunits are PetG, PetL, PetM and PetN. The complex functions as a dimer. It depends on heme as a cofactor.

Its subcellular location is the plastid. The protein resides in the chloroplast thylakoid membrane. Component of the cytochrome b6-f complex, which mediates electron transfer between photosystem II (PSII) and photosystem I (PSI), cyclic electron flow around PSI, and state transitions. In Manihot esculenta (Cassava), this protein is Cytochrome f.